A 474-amino-acid polypeptide reads, in one-letter code: tRNA-2-methylthio-N(6)-dimethylallyladenosine synthase (474 aa).

The 118-residue stretch at 3-120 folds into the MTTase N-terminal domain; the sequence is KKLHIKTWGC…LPEMINHVQE (118 aa). Positions 12, 49, 83, 157, 161, and 164 each coordinate [4Fe-4S] cluster. In terms of domain architecture, Radical SAM core spans 143-375; the sequence is RAEGPTAFVS…QQRISQQAME (233 aa). The region spanning 378–441 is the TRAM domain; sequence RKMVGTVQRV…ASSLRGILLR (64 aa).

Belongs to the methylthiotransferase family. MiaB subfamily. As to quaternary structure, monomer. Requires [4Fe-4S] cluster as cofactor.

Its subcellular location is the cytoplasm. The catalysed reaction is N(6)-dimethylallyladenosine(37) in tRNA + (sulfur carrier)-SH + AH2 + 2 S-adenosyl-L-methionine = 2-methylsulfanyl-N(6)-dimethylallyladenosine(37) in tRNA + (sulfur carrier)-H + 5'-deoxyadenosine + L-methionine + A + S-adenosyl-L-homocysteine + 2 H(+). In terms of biological role, catalyzes the methylthiolation of N6-(dimethylallyl)adenosine (i(6)A), leading to the formation of 2-methylthio-N6-(dimethylallyl)adenosine (ms(2)i(6)A) at position 37 in tRNAs that read codons beginning with uridine. This chain is tRNA-2-methylthio-N(6)-dimethylallyladenosine synthase, found in Yersinia pseudotuberculosis serotype O:3 (strain YPIII).